The chain runs to 558 residues: PE cleavage protein A (558 aa).

The PE domain occupies 1–93 (MSFLVVVPEF…SGSYAAAEAT (93 aa)). Residue Asp297 is part of the active site.

Belongs to the mycobacterial PE family. PGRS subfamily. In terms of processing, undergoes auto-proteolytic processing.

The protein resides in the secreted. It is found in the cell surface. In terms of biological role, aspartic protease that processes the lipase LipY and other PE_PGRS proteins. Can also cleave itself. The sequence is that of PE cleavage protein A from Mycobacterium tuberculosis (strain CDC 1551 / Oshkosh).